Consider the following 410-residue polypeptide: Lipid droplet-regulating VLDL assembly factor AUP1 (410 aa).

Residue methionine 1 is modified to N-acetylmethionine. Residues 1–20 (MEPPPAPGPERLFDSHRLPS) are Cytoplasmic-facing. An intramembrane segment occupies 21–41 (DGFLLLALLLYAPVGLCLLVL). Residues 42-410 (RLFLGLHVFL…FRERQAQEAE (369 aa)) lie on the Cytoplasmic side of the membrane. Residues 258-295 (RLTPADKAEHMKRQRHPRLRPQSVQSSFPSPPSPSSDV) form a disordered region. Serine 292 is modified (phosphoserine). Residues 296 to 338 (QLTTLAHRVKEVLPHVPLNVIQRDLARTGCVDLTITNLLEGAV) enclose the CUE domain. Residues 344-369 (DVTEGSQSPPAPSAPKFPSSGLATPQ) are disordered. Serine 363 is modified (phosphoserine). A Phosphothreonine modification is found at threonine 367.

This sequence belongs to the AUP1 family. Identified in a complex that contains SEL1L, OS9, FAF2/UBXD8, UBE2J1/UBC6E and AUP1. Interacts with the cytoplasmic tail of ITGA2B, ITGA1, ITGA2, ITGA5, ITGAV and ITGAM. Interacts (via C-terminus) with UBE2G2; the interaction recruits UBE2G2 to lipid droplets. Interacts with ubiquitin ligases AMFR/gp78 and RNF139/TRC8; this promotes interaction of UBE2G2 with AMFR and RNF139. Interacts with apolipoprotein APOB. In terms of processing, monoubiquitinated and diubiquitinated. Ubiquitous.

It is found in the endoplasmic reticulum membrane. It localises to the lipid droplet. Its function is as follows. Plays a role in the translocation of terminally misfolded proteins from the endoplasmic reticulum lumen to the cytoplasm and their degradation by the proteasome. Plays a role in lipid droplet formation. Induces lipid droplet clustering. Recruits ubiquitin-conjugating enzyme UBE2G2 to lipid droplets which facilitates its interaction with ubiquitin ligases AMFR/gp78 and RNF139/TRC8, leading to sterol-induced ubiquitination of HMGCR and its subsequent proteasomal degradation. Also required for the degradation of INSIG1, SREBF1 and SREBF2. Plays a role in regulating assembly and secretion of very low density lipoprotein particles and stability of apolipoprotein APOB. This is Lipid droplet-regulating VLDL assembly factor AUP1 from Mus musculus (Mouse).